A 307-amino-acid chain; its full sequence is N-myc-interactor (307 aa).

Residues 1 to 24 (MEADKDDTQQILKEHSPDEFIKDE) are disordered. Ser16 is subject to Phosphoserine. Residue Lys22 forms a Glycyl lysine isopeptide (Lys-Gly) (interchain with G-Cter in ubiquitin) linkage. A coiled-coil region spans residues 30 to 64 (IDEITKKNIQLKKEIQKLETELQEATKEFQIKEDI). 2 NID domains span residues 103-192 (GQAL…GEVD) and 201-292 (GSAV…EVDV).

It belongs to the NMI family. In terms of assembly, interacts with MYCN and MYC, as well as with other transcription factors with a Zip, HLH or a HLH-Zip motif. Interacts with all STAT proteins except STAT2. Interacts with IRF7, the interaction is direct and leads to the inhibition of IRF7-mediated type I IFN production. Interacts (via coiled-coil domain) with TRIM21 (via the SPRY domain); the interaction leads to 'Lys-63'-linked ubiquitination of NMI. Interacts with IFI35; the interaction is direct and is facilitated by TRIM21. Interacts with TLR4; the interaction is direct and leads to NF-kappa-B activation. As to quaternary structure, (Microbial infection) Interacts with human cytomegalovirus protein UL23; this interaction inhibits NMI-mediated transcription of interferon-gamma stimulated genes. Ubiquitinated. 'Lys-63'-linked ubiquitination by TRIM21 promotes interaction with IFI35 and inhibits virus-triggered type I IFN-beta production. As to expression, expressed in adult spleen, liver, and kidney. Expressed in fetal thymus, liver, placenta, spleen, lung, and kidney but not brain. Expressed in macrophages.

The protein resides in the cytoplasm. It is found in the nucleus. Its subcellular location is the secreted. Acts as a signaling pathway regulator involved in innate immune system response. In response to interleukin 2/IL2 and interferon IFN-gamma/IFNG, interacts with signal transducer and activator of transcription/STAT which activate the transcription of downstream genes involved in a multitude of signals for development and homeostasis. Enhances the recruitment of CBP/p300 coactivators to STAT1 and STAT5, resulting in increased STAT1- and STAT5-dependent transcription. In response to interferon IFN-alpha, associates in a complex with signaling pathway regulator IFI35 to regulate immune response; the complex formation prevents proteasome-mediated degradation of IFI35. In complex with IFI35, inhibits virus-triggered type I IFN-beta production when ubiquitinated by ubiquitin-protein ligase TRIM21. In complex with IFI35, negatively regulates nuclear factor NF-kappa-B signaling by inhibiting the nuclear translocation, activation and transcription of NF-kappa-B subunit p65/RELA, resulting in the inhibition of endothelial cell proliferation, migration and re-endothelialization of injured arteries. Negatively regulates virus-triggered type I interferon/IFN production by inducing proteosome-dependent degradation of IRF7, a transcriptional regulator of type I IFN, thereby interfering with cellular antiviral responses. Beside its role as an intracellular signaling pathway regulator, also functions extracellularly as damage-associated molecular patterns (DAMPs) to promote inflammation, when actively released by macrophage to the extracellular space during cell injury or pathogen invasion. Macrophage-secreted NMI activates NF-kappa-B signaling in adjacent macrophages through Toll-like receptor 4/TLR4 binding and activation, thereby inducing NF-kappa-B translocation from the cytoplasm into the nucleus which promotes the release of pro-inflammatory cytokines. In Homo sapiens (Human), this protein is N-myc-interactor.